The primary structure comprises 386 residues: MADSCRNLTYVRGSVGPATSTLMFVAGVVGNGLALGILSARRPARPSAFAVLVTGLAATDLLGTSFLSPAVFVAYARNSSLLGLARGGPALCDAFAFAMTFFGLASMLILFAMAVERCLALSHPYLYAQLDGPRCARLALPAIYAFCVLFCALPLLGLGQHQQYCPGSWCFLRMRWAQPGGAAFSLAYAGLVALLVAAIFLCNGSVTLSLCRMYRQQKRHQGSLGPRPRTGEDEVDHLILLALMTVVMAVCSLPLTIRCFTQAVAPDSSSEMGDLLAFRFYAFNPILDPWVFILFRKAVFQRLKLWVCCLCLGPAHGDSQTPLSQLASGRRDPRAPSAPVGKEGSCVPLSAWGEGQVEPLPPTQQSSGSAVGTSSKAEASVACSLC.

Residues 1–16 lie on the Extracellular side of the membrane; it reads MADSCRNLTYVRGSVG. 2 cysteine pairs are disulfide-bonded: Cys5/Cys165 and Cys92/Cys170. A glycan (N-linked (GlcNAc...) asparagine) is linked at Asn7. Residues 17 to 38 traverse the membrane as a helical segment; the sequence is PATSTLMFVAGVVGNGLALGIL. Residues 39 to 51 lie on the Cytoplasmic side of the membrane; it reads SARRPARPSAFAV. The helical transmembrane segment at 52 to 76 threads the bilayer; it reads LVTGLAATDLLGTSFLSPAVFVAYA. Residues 77-94 lie on the Extracellular side of the membrane; it reads RNSSLLGLARGGPALCDA. Residues 95-115 traverse the membrane as a helical segment; sequence FAFAMTFFGLASMLILFAMAV. Residues 116-134 are Cytoplasmic-facing; it reads ERCLALSHPYLYAQLDGPR. The helical transmembrane segment at 135 to 158 threads the bilayer; sequence CARLALPAIYAFCVLFCALPLLGL. Residues 159-181 are Extracellular-facing; that stretch reads GQHQQYCPGSWCFLRMRWAQPGG. A helical membrane pass occupies residues 182–208; the sequence is AAFSLAYAGLVALLVAAIFLCNGSVTL. Residues 209–235 are Cytoplasmic-facing; that stretch reads SLCRMYRQQKRHQGSLGPRPRTGEDEV. Residues 236 to 260 traverse the membrane as a helical segment; it reads DHLILLALMTVVMAVCSLPLTIRCF. Residues 261 to 274 lie on the Extracellular side of the membrane; that stretch reads TQAVAPDSSSEMGD. Residues 275-295 traverse the membrane as a helical segment; sequence LLAFRFYAFNPILDPWVFILF. The Cytoplasmic portion of the chain corresponds to 296-386; that stretch reads RKAVFQRLKL…AEASVACSLC (91 aa). The disordered stretch occupies residues 322 to 376; it reads PLSQLASGRRDPRAPSAPVGKEGSCVPLSAWGEGQVEPLPPTQQSSGSAVGTSSK. Positions 363–376 are enriched in polar residues; it reads TQQSSGSAVGTSSK. The residue at position 383 (Cys383) is a Cysteine methyl ester. Cys383 is lipidated: S-farnesyl cysteine. Positions 384 to 386 are cleaved as a propeptide — removed in mature form; the sequence is SLC.

Belongs to the G-protein coupled receptor 1 family. In terms of assembly, interacts (non-isoprenylated C-terminus) with PDZK1. Post-translationally, isoprenylation does not influence ligand binding but is required for efficient coupling to the effectors adenylyl cyclase and phospholipase C.

The protein localises to the cell membrane. Functionally, receptor for prostacyclin (prostaglandin I2 or PGI2). The activity of this receptor is mediated by G(s) proteins which activate adenylate cyclase. The polypeptide is Prostacyclin receptor (PTGIR) (Homo sapiens (Human)).